The primary structure comprises 860 residues: Leucine--tRNA ligase (860 aa).

The 'HIGH' region motif lies at 42 to 52; the sequence is PYPSGRLHMGH. The 'KMSKS' region signature appears at 619 to 623; it reads KMSKS. Lys-622 provides a ligand contact to ATP.

This sequence belongs to the class-I aminoacyl-tRNA synthetase family.

The protein localises to the cytoplasm. The enzyme catalyses tRNA(Leu) + L-leucine + ATP = L-leucyl-tRNA(Leu) + AMP + diphosphate. In Shigella sonnei (strain Ss046), this protein is Leucine--tRNA ligase.